A 255-amino-acid polypeptide reads, in one-letter code: 2,3-dehydroadipyl-CoA hydratase (255 aa).

This sequence belongs to the enoyl-CoA hydratase/isomerase family.

It carries out the reaction a (3S)-3-hydroxyacyl-CoA = a (2E)-enoyl-CoA + H2O. It catalyses the reaction a 4-saturated-(3S)-3-hydroxyacyl-CoA = a (3E)-enoyl-CoA + H2O. It participates in aromatic compound metabolism; phenylacetate degradation. Catalyzes the reversible conversion of enzymatically produced 2,3-dehydroadipyl-CoA into 3-hydroxyadipyl-CoA. The protein is 2,3-dehydroadipyl-CoA hydratase (paaF) of Escherichia coli (strain K12).